A 102-amino-acid chain; its full sequence is MYAIIKTGGKQIKVEEGQTVYIEKLAAEAGETVTFEDVLFVGGDNVKVGNPTVEGATVTAKVEKQGRAKKITVFRYKPKKNVHKKQGHRQPYTKVTIEKINA.

This sequence belongs to the bacterial ribosomal protein bL21 family. In terms of assembly, part of the 50S ribosomal subunit. Contacts protein L20.

Its function is as follows. This protein binds to 23S rRNA in the presence of protein L20. This chain is Large ribosomal subunit protein bL21, found in Bacillus subtilis (strain 168).